A 200-amino-acid chain; its full sequence is Serine/threonine-protein kinase mos (200 aa).

Residues 2–200 enclose the Protein kinase domain; it reads LCLLQPLGSG…ELLKGERVTA (199 aa). ATP is bound by residues 8 to 16 and K29; that span reads LGSGGFGSV. D143 serves as the catalytic Proton acceptor.

Belongs to the protein kinase superfamily. Ser/Thr protein kinase family.

The enzyme catalyses L-seryl-[protein] + ATP = O-phospho-L-seryl-[protein] + ADP + H(+). The catalysed reaction is L-threonyl-[protein] + ATP = O-phospho-L-threonyl-[protein] + ADP + H(+). This is Serine/threonine-protein kinase mos (MOS) from Apteryx australis (Southern brown kiwi).